A 451-amino-acid polypeptide reads, in one-letter code: UDP-N-acetyl-alpha-D-muramoyl-L-alanyl-L-glutamate epimerase (451 aa).

The protein belongs to the MurL family.

It catalyses the reaction UDP-N-acetyl-alpha-D-muramoyl-L-alanyl-L-glutamate + ATP + H2O = UDP-N-acetyl-alpha-D-muramoyl-L-alanyl-D-glutamate + AMP + diphosphate + H(+). Its pathway is cell wall biogenesis; peptidoglycan biosynthesis. Its function is as follows. Cell wall formation. Catalyzes epimerization of the terminal L-glutamate in UDP-N-acetyl-alpha-D-muramoyl-L-alanyl-L-glutamate. The chain is UDP-N-acetyl-alpha-D-muramoyl-L-alanyl-L-glutamate epimerase from Xanthomonas oryzae pv. oryzae (strain MAFF 311018).